The sequence spans 127 residues: Aspartate 1-decarboxylase (127 aa).

The Schiff-base intermediate with substrate; via pyruvic acid role is filled by serine 25. Serine 25 bears the Pyruvic acid (Ser) mark. Threonine 57 is a substrate binding site. Tyrosine 58 serves as the catalytic Proton donor. Residue 73 to 75 (GAA) coordinates substrate.

It belongs to the PanD family. Heterooctamer of four alpha and four beta subunits. Pyruvate is required as a cofactor. Is synthesized initially as an inactive proenzyme, which is activated by self-cleavage at a specific serine bond to produce a beta-subunit with a hydroxyl group at its C-terminus and an alpha-subunit with a pyruvoyl group at its N-terminus.

The protein resides in the cytoplasm. It catalyses the reaction L-aspartate + H(+) = beta-alanine + CO2. It functions in the pathway cofactor biosynthesis; (R)-pantothenate biosynthesis; beta-alanine from L-aspartate: step 1/1. Its function is as follows. Catalyzes the pyruvoyl-dependent decarboxylation of aspartate to produce beta-alanine. The sequence is that of Aspartate 1-decarboxylase from Bacillus subtilis (strain 168).